The primary structure comprises 93 residues: YcgL domain-containing protein swp_2294 (93 aa).

The YcgL domain occupies Met1 to Lys85.

The polypeptide is YcgL domain-containing protein swp_2294 (Shewanella piezotolerans (strain WP3 / JCM 13877)).